A 271-amino-acid chain; its full sequence is Glutamate racemase (271 aa).

Substrate is bound by residues 9-10 (DS) and 41-42 (YG). Cysteine 72 acts as the Proton donor/acceptor in catalysis. 73 to 74 (NT) contacts substrate. Catalysis depends on cysteine 183, which acts as the Proton donor/acceptor. 184-185 (TH) is a binding site for substrate.

The protein belongs to the aspartate/glutamate racemases family.

It catalyses the reaction L-glutamate = D-glutamate. It participates in cell wall biogenesis; peptidoglycan biosynthesis. Its function is as follows. Provides the (R)-glutamate required for cell wall biosynthesis. The sequence is that of Glutamate racemase from Exiguobacterium sibiricum (strain DSM 17290 / CCUG 55495 / CIP 109462 / JCM 13490 / 255-15).